A 109-amino-acid chain; its full sequence is Large ribosomal subunit protein eL30 (109 aa).

It belongs to the eukaryotic ribosomal protein eL30 family.

This Methanopyrus kandleri (strain AV19 / DSM 6324 / JCM 9639 / NBRC 100938) protein is Large ribosomal subunit protein eL30.